Consider the following 139-residue polypeptide: Protein archease (139 aa).

Aspartate 12, aspartate 138, and isoleucine 139 together coordinate Ca(2+).

The protein belongs to the archease family.

Its function is as follows. Activates the tRNA-splicing ligase complex by facilitating the enzymatic turnover of catalytic subunit RtcB. Acts by promoting the guanylylation of RtcB, a key intermediate step in tRNA ligation. Can also alter the NTP specificity of RtcB such that ATP, dGTP or ITP is used efficiently. The sequence is that of Protein archease from Sulfolobus acidocaldarius (strain ATCC 33909 / DSM 639 / JCM 8929 / NBRC 15157 / NCIMB 11770).